The following is a 637-amino-acid chain: Probable potassium transport system protein Kup 2 (637 aa).

12 helical membrane passes run 18 to 38 (FLVL…TSPL), 61 to 81 (LISL…VLFL), 107 to 127 (MPVL…DAMI), 145 to 165 (PAFS…LFAV), 174 to 194 (AVFF…GGLI), 211 to 231 (ALWF…AVFL), 255 to 275 (WFIL…ALVL), 293 to 313 (ALFP…QAVI), 345 to 365 (IYVP…IFSF), 371 to 391 (LATA…LMAF), 402 to 422 (AFTA…FLAA), and 429 to 449 (DGGW…WTWT).

The protein belongs to the HAK/KUP transporter (TC 2.A.72) family.

The protein localises to the cell inner membrane. It catalyses the reaction K(+)(in) + H(+)(in) = K(+)(out) + H(+)(out). Functionally, transport of potassium into the cell. Likely operates as a K(+):H(+) symporter. This is Probable potassium transport system protein Kup 2 from Agrobacterium fabrum (strain C58 / ATCC 33970) (Agrobacterium tumefaciens (strain C58)).